Consider the following 731-residue polypeptide: MVVDPYQKREAKRYKNPIPSREYISSCLRTSQDLISQKNLEKKFGINNQESKKALRRRLRAMERDGQVIYTSNRCYVAPESLKIVKGKVIGHRDGYGFLRTETLKEDLWLSSEQMKSCIHGDIILAHIVETHGKRRSSARFLKLLQPNNILIVGRYYIDDKIKFVIPDDTRFNFKIFIFSAIKDDISIGSIVSVKLKQHPIRNSRVQGFIVEILGKEMGTNLAIEIALRTHLIPSLWSKEVKKQVYEISRKINQYDFKNRTDLRHFPFFTIDDEDARDFDDAVFCKRKANPEEGWILWVAIADVSCYVQPNTPLDKAALERGTSVYFPSLVIPMLPEKISTDLCSLKPNVERLCLICEMSLSKQGELISYKHYEGIICSHGRFTYNEIFKIWNGDIFLRSKYKKFLKDIENLSCLQNIFNKDNISKKGIYFENIEPKFVLDSNLRIKSIYQNIRNDAHKFIESCMILANVASARFVEKYKYPVLFRNHDRPKKDNVVSLRLFLNELGFTLLGGDSPESVHYSNLLKNVSDRPEYEMIQTVLLRSMTQAVYSPDNRGHFGLSLSSYVHFTSPIRRYPDLILHRVIKYLLFKDKNTSKSNYNFYSAHLYSTGEIKKIGAHCSITERRADEANRDVIDWLKCDFMYKKIGCILNGVISNVTTFGFFVRLNQFFIDGLVHINSLNDDYYYFDSLGLKLIGKSTKNTYCLGDALKVKVISVNLNEKKIELSLYKSS.

An RNB domain is found at 260 to 589 (RTDLRHFPFF…LHRVIKYLLF (330 aa)). Residues 647–728 (GCILNGVISN…NEKKIELSLY (82 aa)) enclose the S1 motif domain.

Belongs to the RNR ribonuclease family. RNase R subfamily. In terms of assembly, monomer.

It localises to the cytoplasm. The catalysed reaction is Exonucleolytic cleavage in the 3'- to 5'-direction to yield nucleoside 5'-phosphates.. In terms of biological role, 3'-5' exoribonuclease that releases 5'-nucleoside monophosphates and is involved in maturation of structured RNAs. The sequence is that of Ribonuclease R from Buchnera aphidicola subsp. Acyrthosiphon pisum (strain APS) (Acyrthosiphon pisum symbiotic bacterium).